The following is a 401-amino-acid chain: Dual-specificity RNA methyltransferase RlmN (401 aa).

The active-site Proton acceptor is Glu-114. The 246-residue stretch at 120 to 365 (DKGRGTLCVS…TMVRRTRGDD (246 aa)) folds into the Radical SAM core domain. Cys-127 and Cys-370 are joined by a disulfide. Residues Cys-134, Cys-138, and Cys-141 each contribute to the [4Fe-4S] cluster site. Residues 187–188 (GE), Ser-219, 241–243 (SLH), and Asn-327 each bind S-adenosyl-L-methionine. The active-site S-methylcysteine intermediate is the Cys-370.

Belongs to the radical SAM superfamily. RlmN family. Requires [4Fe-4S] cluster as cofactor.

Its subcellular location is the cytoplasm. The catalysed reaction is adenosine(2503) in 23S rRNA + 2 reduced [2Fe-2S]-[ferredoxin] + 2 S-adenosyl-L-methionine = 2-methyladenosine(2503) in 23S rRNA + 5'-deoxyadenosine + L-methionine + 2 oxidized [2Fe-2S]-[ferredoxin] + S-adenosyl-L-homocysteine. The enzyme catalyses adenosine(37) in tRNA + 2 reduced [2Fe-2S]-[ferredoxin] + 2 S-adenosyl-L-methionine = 2-methyladenosine(37) in tRNA + 5'-deoxyadenosine + L-methionine + 2 oxidized [2Fe-2S]-[ferredoxin] + S-adenosyl-L-homocysteine. Functionally, specifically methylates position 2 of adenine 2503 in 23S rRNA and position 2 of adenine 37 in tRNAs. m2A2503 modification seems to play a crucial role in the proofreading step occurring at the peptidyl transferase center and thus would serve to optimize ribosomal fidelity. This chain is Dual-specificity RNA methyltransferase RlmN, found in Xanthomonas axonopodis pv. citri (strain 306).